An 876-amino-acid polypeptide reads, in one-letter code: Probable galactinol--sucrose galactosyltransferase 4 (876 aa).

Residues S7 and S9 each carry the phosphoserine modification.

Belongs to the glycosyl hydrolases 36 family.

The enzyme catalyses alpha-D-galactosyl-(1-&gt;3)-1D-myo-inositol + sucrose = raffinose + myo-inositol. Its function is as follows. Transglycosidase operating by a ping-pong reaction mechanism. Involved in the synthesis of raffinose, a major soluble carbohydrate in seeds, roots and tubers. The chain is Probable galactinol--sucrose galactosyltransferase 4 (RFS4) from Arabidopsis thaliana (Mouse-ear cress).